The following is a 306-amino-acid chain: Arginase (306 aa).

4 residues coordinate Mn(2+): His96, Asp123, His125, and Asp127. Substrate-binding positions include 125–129 (HTDFH), 136–138 (SGN), and Asp178. Mn(2+)-binding residues include Asp226 and Asp228. Substrate is bound by residues Thr240 and Glu271.

Belongs to the arginase family. It depends on Mn(2+) as a cofactor.

It carries out the reaction L-arginine + H2O = urea + L-ornithine. It participates in nitrogen metabolism; urea cycle; L-ornithine and urea from L-arginine: step 1/1. In Brucella abortus biovar 1 (strain 9-941), this protein is Arginase (arcB).